The primary structure comprises 604 residues: Putative O-acetyltransferase SAV0974 (604 aa).

The next 11 helical transmembrane spans lie at 15–35 (YMPGLDGLRAIAVLGIIIYHL), 43–63 (GFLGVDTFFVISGYLITSLLL), 85–105 (LLPAVIVLLMVVGTATLLLKS), 150–170 (AIEEQFYIFFPVILVTLLLTI), 176–196 (IGFIFWGVSIISLGLMMFIYS), 212–232 (LQTLLLGVILAFLWPPFKLKN), 240–260 (YVIDSIGSLSFIVLILLFFII), 267–287 (IYDGGFYLISILTLFIIASVV), 310–330 (YSLYLWHFAVISFVHSYYVDG), 332–352 (IPVYVYFIDISLTIIFAELSY), and 377–397 (FIRMAIVVTLLIPFMLILVGA). Active-site residues include Ser-459, Asp-581, and His-584.

This sequence belongs to the acyltransferase 3 family.

Its subcellular location is the cell membrane. The polypeptide is Putative O-acetyltransferase SAV0974 (Staphylococcus aureus (strain Mu50 / ATCC 700699)).